A 291-amino-acid chain; its full sequence is ATP synthase gamma chain (291 aa).

This sequence belongs to the ATPase gamma chain family. In terms of assembly, F-type ATPases have 2 components, CF(1) - the catalytic core - and CF(0) - the membrane proton channel. CF(1) has five subunits: alpha(3), beta(3), gamma(1), delta(1), epsilon(1). CF(0) has three main subunits: a, b and c.

Its subcellular location is the cell inner membrane. Its function is as follows. Produces ATP from ADP in the presence of a proton gradient across the membrane. The gamma chain is believed to be important in regulating ATPase activity and the flow of protons through the CF(0) complex. The polypeptide is ATP synthase gamma chain (Neisseria meningitidis serogroup B (strain ATCC BAA-335 / MC58)).